The chain runs to 104 residues: N(4)-acetylcytidine amidohydrolase (104 aa).

The ASCH domain maps to 6-96 (ITFYQRFEAD…TIYPNEHESW (91 aa)). Lysine 21 functions as the Proton acceptor in the catalytic mechanism. Threonine 24 functions as the Nucleophile in the catalytic mechanism. The Proton donor role is filled by glutamate 74.

Belongs to the N(4)-acetylcytidine amidohydrolase family.

The enzyme catalyses N(4)-acetylcytidine + H2O = cytidine + acetate + H(+). It catalyses the reaction N(4)-acetyl-2'-deoxycytidine + H2O = 2'-deoxycytidine + acetate + H(+). It carries out the reaction N(4)-acetylcytosine + H2O = cytosine + acetate + H(+). Functionally, catalyzes the hydrolysis of N(4)-acetylcytidine (ac4C). The chain is N(4)-acetylcytidine amidohydrolase from Haemophilus influenzae (strain 86-028NP).